The following is a 347-amino-acid chain: 3-keto-steroid reductase ERG27 (347 aa).

Residues Leu-15, Thr-38, and Arg-44 each contribute to the NADP(+) site. Catalysis depends on proton donor residues Ser-179 and Tyr-202. NADP(+) contacts are provided by Tyr-202, Lys-206, and Ser-237. Catalysis depends on Lys-206, which acts as the Lowers pKa of active site Tyr. Thr-345 is modified (phosphothreonine).

It belongs to the short-chain dehydrogenases/reductases (SDR) family. ERG27 subfamily. Heterotetramer of ERG25, ERG26, ERG27 and ERG28. ERG28 acts as a scaffold to tether ERG27 and other 4,4-demethylation-related enzymes, forming a demethylation enzyme complex, in the endoplasmic reticulum. Interacts with ERG25 and ERG28. Also interacts with ERG7, but only in lipid particles.

It is found in the endoplasmic reticulum membrane. It localises to the lipid droplet. The catalysed reaction is 3-dehydro-4alpha-methylzymosterol + NADPH + H(+) = 4alpha-methylzymosterol + NADP(+). The protein operates within steroid biosynthesis; zymosterol biosynthesis; zymosterol from lanosterol: step 5/6. Its function is as follows. 3-keto-steroid reductase; part of the third module of ergosterol biosynthesis pathway that includes the late steps of the pathway. ERG27 is a catalytic component of the C-4 demethylation complex that catalyze the reduction of the keto group on the C-3. The third module or late pathway involves the ergosterol synthesis itself through consecutive reactions that mainly occur in the endoplasmic reticulum (ER) membrane. Firstly, the squalene synthase ERG9 catalyzes the condensation of 2 farnesyl pyrophosphate moieties to form squalene, which is the precursor of all steroids. Squalene synthase is crucial for balancing the incorporation of farnesyl diphosphate (FPP) into sterol and nonsterol isoprene synthesis. Secondly, the squalene epoxidase ERG1 catalyzes the stereospecific oxidation of squalene to (S)-2,3-epoxysqualene, which is considered to be a rate-limiting enzyme in steroid biosynthesis. Then, the lanosterol synthase ERG7 catalyzes the cyclization of (S)-2,3 oxidosqualene to lanosterol, a reaction that forms the sterol core. In the next steps, lanosterol is transformed to zymosterol through a complex process involving various demethylation, reduction and desaturation reactions. The lanosterol 14-alpha-demethylase ERG11 (also known as CYP51) catalyzes C14-demethylation of lanosterol to produce 4,4'-dimethyl cholesta-8,14,24-triene-3-beta-ol, which is critical for ergosterol biosynthesis. The C-14 reductase ERG24 reduces the C14=C15 double bond of 4,4-dimethyl-cholesta-8,14,24-trienol to produce 4,4-dimethyl-cholesta-8,24-dienol. 4,4-dimethyl-cholesta-8,24-dienol is substrate of the C-4 demethylation complex ERG25-ERG26-ERG27 in which ERG25 catalyzes the three-step monooxygenation required for the demethylation of 4,4-dimethyl and 4alpha-methylsterols, ERG26 catalyzes the oxidative decarboxylation that results in a reduction of the 3-beta-hydroxy group at the C-3 carbon to an oxo group, and ERG27 is responsible for the reduction of the keto group on the C-3. ERG28 has a role as a scaffold to help anchor ERG25, ERG26 and ERG27 to the endoplasmic reticulum and ERG29 regulates the activity of the iron-containing C4-methylsterol oxidase ERG25. Then, the sterol 24-C-methyltransferase ERG6 catalyzes the methyl transfer from S-adenosyl-methionine to the C-24 of zymosterol to form fecosterol. The C-8 sterol isomerase ERG2 catalyzes the reaction which results in unsaturation at C-7 in the B ring of sterols and thus converts fecosterol to episterol. The sterol-C5-desaturase ERG3 then catalyzes the introduction of a C-5 double bond in the B ring to produce 5-dehydroepisterol. The C-22 sterol desaturase ERG5 further converts 5-dehydroepisterol into ergosta-5,7,22,24(28)-tetraen-3beta-ol by forming the C-22(23) double bond in the sterol side chain. Finally, ergosta-5,7,22,24(28)-tetraen-3beta-ol is substrate of the C-24(28) sterol reductase ERG4 to produce ergosterol. Facilitates the association of ERG7 with lipid particles preventing its digestion in the endoplasmic reticulum and the lipid particles. This is 3-keto-steroid reductase ERG27 from Saccharomyces cerevisiae (strain ATCC 204508 / S288c) (Baker's yeast).